The primary structure comprises 250 residues: Probable transcriptional regulatory protein SYNAS_07390 (250 aa).

Belongs to the TACO1 family.

The protein resides in the cytoplasm. In Syntrophus aciditrophicus (strain SB), this protein is Probable transcriptional regulatory protein SYNAS_07390.